We begin with the raw amino-acid sequence, 299 residues long: Lipoyl synthase 2 (299 aa).

[4Fe-4S] cluster contacts are provided by C43, C48, C54, C69, C73, C76, and S294. In terms of domain architecture, Radical SAM core spans 55–283 (YAAGTATFLL…GAVARDLGFA (229 aa)).

This sequence belongs to the radical SAM superfamily. Lipoyl synthase family. The cofactor is [4Fe-4S] cluster.

The protein resides in the cytoplasm. It catalyses the reaction [[Fe-S] cluster scaffold protein carrying a second [4Fe-4S](2+) cluster] + N(6)-octanoyl-L-lysyl-[protein] + 2 oxidized [2Fe-2S]-[ferredoxin] + 2 S-adenosyl-L-methionine + 4 H(+) = [[Fe-S] cluster scaffold protein] + N(6)-[(R)-dihydrolipoyl]-L-lysyl-[protein] + 4 Fe(3+) + 2 hydrogen sulfide + 2 5'-deoxyadenosine + 2 L-methionine + 2 reduced [2Fe-2S]-[ferredoxin]. Its pathway is protein modification; protein lipoylation via endogenous pathway; protein N(6)-(lipoyl)lysine from octanoyl-[acyl-carrier-protein]: step 2/2. In terms of biological role, catalyzes the radical-mediated insertion of two sulfur atoms into the C-6 and C-8 positions of the octanoyl moiety bound to the lipoyl domains of lipoate-dependent enzymes, thereby converting the octanoylated domains into lipoylated derivatives. This is Lipoyl synthase 2 from Parasynechococcus marenigrum (strain WH8102).